A 167-amino-acid polypeptide reads, in one-letter code: N5-carboxyaminoimidazole ribonucleotide mutase (167 aa).

Residues serine 11, aspartate 14, and arginine 41 each contribute to the substrate site.

The protein belongs to the AIR carboxylase family. Class I subfamily.

It catalyses the reaction 5-carboxyamino-1-(5-phospho-D-ribosyl)imidazole + H(+) = 5-amino-1-(5-phospho-D-ribosyl)imidazole-4-carboxylate. The protein operates within purine metabolism; IMP biosynthesis via de novo pathway; 5-amino-1-(5-phospho-D-ribosyl)imidazole-4-carboxylate from 5-amino-1-(5-phospho-D-ribosyl)imidazole (N5-CAIR route): step 2/2. Functionally, catalyzes the conversion of N5-carboxyaminoimidazole ribonucleotide (N5-CAIR) to 4-carboxy-5-aminoimidazole ribonucleotide (CAIR). This is N5-carboxyaminoimidazole ribonucleotide mutase from Aquifex aeolicus (strain VF5).